Consider the following 652-residue polypeptide: Regulator of DNA class I crossover intermediates 1 (652 aa).

Residues 1–231 (MNWVGGSRSR…TLFERLNSLG (231 aa)) constitute a DNA-binding region (binds DNA containing a D-loop). Disordered stretches follow at residues 363–434 (NKTS…NIPS) and 469–506 (KISL…EDQI). Over residues 377–388 (YQREYNKNERND) the composition is skewed to basic and acidic residues. Positions 389–401 (LSTSFENDYYPSS) are enriched in polar residues. Positions 402-417 (SERKEKFENDYQEKTP) are enriched in basic and acidic residues. Low complexity predominate over residues 473–498 (DSAQSSRSTSYSPRPTDSCFSSSSDL).

In terms of assembly, interacts with MSH5. Interacts with TEX11.

The protein localises to the chromosome. Functionally, involved in recombination, probably acting by stabilizing recombination intermediates during meiotic crossover formation. Required for normal germline development and fertility. Required for meiotic progression, complete chromosomal synapsis and crossover formation. Binds double-stranded DNA. However, also binds branched DNA molecules, such as those containing a D-loop or Holliday junction structure. Probably not required for formation of DNA double-strand breaks (DSBs). Also binds RNA in an RNA structure-independent manner, with a preference for binding 3'-UTR regions of mRNAs; may stabilize bound RNAs. This is Regulator of DNA class I crossover intermediates 1 from Homo sapiens (Human).